Here is a 202-residue protein sequence, read N- to C-terminus: Imidazoleglycerol-phosphate dehydratase (202 aa).

It belongs to the imidazoleglycerol-phosphate dehydratase family.

It is found in the cytoplasm. The enzyme catalyses D-erythro-1-(imidazol-4-yl)glycerol 3-phosphate = 3-(imidazol-4-yl)-2-oxopropyl phosphate + H2O. Its pathway is amino-acid biosynthesis; L-histidine biosynthesis; L-histidine from 5-phospho-alpha-D-ribose 1-diphosphate: step 6/9. This is Imidazoleglycerol-phosphate dehydratase from Nocardioides sp. (strain ATCC BAA-499 / JS614).